The primary structure comprises 1058 residues: Leucine-rich repeat and coiled-coil domain-containing protein PF3D7_0703800 (1058 aa).

Residues 1–10 (MAIKKKKKET) are compositionally biased toward basic residues. The segment at 1 to 34 (MAIKKKKKETKSKDNNNDNLRNEKKSTNLENGKY) is disordered. Residues 11-34 (KSKDNNNDNLRNEKKSTNLENGKY) are compositionally biased toward basic and acidic residues. The stretch at 515–544 (LKQLYTFIKNYENNNDKLNIKSQIINKDKN) forms a coiled coil. Basic and acidic residues predominate over residues 641 to 661 (ENKDHLQHEEHTHEEEPKDAN). Disordered regions lie at residues 641-665 (ENKD…GDMV) and 706-728 (NIED…ENMK). Residues 872–905 (NYDHTQENILKNKNNMEDQNNLLEQNIMTDQLQN) adopt a coiled-coil conformation.

This Plasmodium falciparum (isolate 3D7) protein is Leucine-rich repeat and coiled-coil domain-containing protein PF3D7_0703800.